The primary structure comprises 620 residues: 1-deoxy-D-xylulose-5-phosphate synthase (620 aa).

Thiamine diphosphate is bound by residues His-80 and 121-123; that span reads GHS. Asp-152 is a Mg(2+) binding site. Residues 153 to 154, Asn-181, Tyr-288, and Glu-370 each bind thiamine diphosphate; that span reads GA. Asn-181 provides a ligand contact to Mg(2+).

The protein belongs to the transketolase family. DXPS subfamily. Homodimer. The cofactor is Mg(2+). Thiamine diphosphate serves as cofactor.

The enzyme catalyses D-glyceraldehyde 3-phosphate + pyruvate + H(+) = 1-deoxy-D-xylulose 5-phosphate + CO2. Its pathway is metabolic intermediate biosynthesis; 1-deoxy-D-xylulose 5-phosphate biosynthesis; 1-deoxy-D-xylulose 5-phosphate from D-glyceraldehyde 3-phosphate and pyruvate: step 1/1. Catalyzes the acyloin condensation reaction between C atoms 2 and 3 of pyruvate and glyceraldehyde 3-phosphate to yield 1-deoxy-D-xylulose-5-phosphate (DXP). The polypeptide is 1-deoxy-D-xylulose-5-phosphate synthase (Escherichia coli (strain 55989 / EAEC)).